The primary structure comprises 813 residues: Nuclear pore complex protein 5 (813 aa).

The protein belongs to the nucleoporin Nup84/Nup107 family. In terms of assembly, part of the nuclear pore complex (NPC). May interact with mdf-1.

It is found in the nucleus. It localises to the nuclear pore complex. The protein localises to the chromosome. Its subcellular location is the centromere. The protein resides in the kinetochore. It is found in the nucleus membrane. Involved in kinetochore assembly and chromosome segregation during embryonic mitosis. Required for the localization of the NDC80 complex member him-10, the chromosomal passenger complex component air-2 and nuclear pore complex proteins npp-23 and npp-15 to kinetochores during metaphase. Required for npp-23 localization to the nuclear envelope during interphase. Recruits mdf-1, a component of the spindle assembly checkpoint, to the nuclear envelope. Appears dispensable for the assembly of the nuclear pore complex and for nuclear protein import. The chain is Nuclear pore complex protein 5 from Caenorhabditis elegans.